The sequence spans 360 residues: Pyrimidine monooxygenase RutA (360 aa).

Residues 49–50, N115, E124, 140–141, and S190 contribute to the FMN site; these read IK and RY.

The protein belongs to the NtaA/SnaA/DszA monooxygenase family. RutA subfamily.

It catalyses the reaction uracil + FMNH2 + NADH + O2 = (Z)-3-ureidoacrylate + FMN + NAD(+) + H2O + H(+). The enzyme catalyses thymine + FMNH2 + NADH + O2 = (Z)-2-methylureidoacrylate + FMN + NAD(+) + H2O + H(+). Its function is as follows. Catalyzes the pyrimidine ring opening between N-3 and C-4 by an unusual flavin hydroperoxide-catalyzed mechanism, adding oxygen atoms in the process to yield ureidoacrylate peracid, that immediately reacts with FMN forming ureidoacrylate and FMN-N(5)-oxide. The FMN-N(5)-oxide reacts spontaneously with NADH to produce FMN. Requires the flavin reductase RutF to regenerate FMN in vivo. The protein is Pyrimidine monooxygenase RutA of Pseudomonas savastanoi pv. phaseolicola (strain 1448A / Race 6) (Pseudomonas syringae pv. phaseolicola (strain 1448A / Race 6)).